Here is a 247-residue protein sequence, read N- to C-terminus: Uridylate kinase (247 aa).

14–17 (KLSG) lines the ATP pocket. An involved in allosteric activation by GTP region spans residues 22-27 (GERGVG). Position 56 (Gly-56) interacts with UMP. ATP-binding residues include Gly-57 and Arg-61. Residues Asp-76 and 137–144 (IGSPYFST) each bind UMP. ATP contacts are provided by Asn-165, Tyr-171, and Asp-174.

The protein belongs to the UMP kinase family. As to quaternary structure, homohexamer.

Its subcellular location is the cytoplasm. It catalyses the reaction UMP + ATP = UDP + ADP. Its pathway is pyrimidine metabolism; CTP biosynthesis via de novo pathway; UDP from UMP (UMPK route): step 1/1. Its activity is regulated as follows. Allosterically activated by GTP. Inhibited by UTP, 5-bromo-UTP and 5-iodo-UTP. Its function is as follows. Catalyzes the reversible phosphorylation of UMP to UDP, with ATP as the most efficient phosphate donor. In Streptococcus pneumoniae serotype 4 (strain ATCC BAA-334 / TIGR4), this protein is Uridylate kinase (pyrH).